We begin with the raw amino-acid sequence, 327 residues long: Aspartate--ammonia ligase (327 aa).

Belongs to the class-II aminoacyl-tRNA synthetase family. AsnA subfamily.

Its subcellular location is the cytoplasm. The enzyme catalyses L-aspartate + NH4(+) + ATP = L-asparagine + AMP + diphosphate + H(+). It participates in amino-acid biosynthesis; L-asparagine biosynthesis; L-asparagine from L-aspartate (ammonia route): step 1/1. In Bacillus mycoides (strain KBAB4) (Bacillus weihenstephanensis), this protein is Aspartate--ammonia ligase.